Here is a 933-residue protein sequence, read N- to C-terminus: Serine/threonine-protein kinase PknD (933 aa).

The 288-residue stretch at 4–291 (YDIIRMIGKG…ALKADIEQHL (288 aa)) folds into the Protein kinase domain. Residues 10–18 (IGKGGMGEV) and K33 each bind ATP. D138 functions as the Proton acceptor in the catalytic mechanism.

It belongs to the protein kinase superfamily. Ser/Thr protein kinase family. In terms of processing, autophosphorylated on serine and threonine residues.

The catalysed reaction is L-seryl-[protein] + ATP = O-phospho-L-seryl-[protein] + ADP + H(+). The enzyme catalyses L-threonyl-[protein] + ATP = O-phospho-L-threonyl-[protein] + ADP + H(+). Functionally, together with the serine/threonine kinase Pkn1, may play a role in the specific interactions with host proteins during intracellular growth. In Chlamydia abortus (strain DSM 27085 / S26/3) (Chlamydophila abortus), this protein is Serine/threonine-protein kinase PknD.